Consider the following 302-residue polypeptide: Sulfate adenylyltransferase subunit 2 (302 aa).

Belongs to the PAPS reductase family. CysD subfamily. In terms of assembly, heterodimer composed of CysD, the smaller subunit, and CysN.

It catalyses the reaction sulfate + ATP + H(+) = adenosine 5'-phosphosulfate + diphosphate. Its pathway is sulfur metabolism; hydrogen sulfide biosynthesis; sulfite from sulfate: step 1/3. Functionally, with CysN forms the ATP sulfurylase (ATPS) that catalyzes the adenylation of sulfate producing adenosine 5'-phosphosulfate (APS) and diphosphate, the first enzymatic step in sulfur assimilation pathway. APS synthesis involves the formation of a high-energy phosphoric-sulfuric acid anhydride bond driven by GTP hydrolysis by CysN coupled to ATP hydrolysis by CysD. The chain is Sulfate adenylyltransferase subunit 2 from Aeromonas hydrophila subsp. hydrophila (strain ATCC 7966 / DSM 30187 / BCRC 13018 / CCUG 14551 / JCM 1027 / KCTC 2358 / NCIMB 9240 / NCTC 8049).